Reading from the N-terminus, the 387-residue chain is Chorismate synthase (387 aa).

Arg-39 and Arg-45 together coordinate NADP(+). FMN contacts are provided by residues 130 to 132, 251 to 252, Gly-295, 310 to 314, and Arg-336; these read RSS, NA, and KPIPT.

This sequence belongs to the chorismate synthase family. Homotetramer. FMNH2 serves as cofactor.

It carries out the reaction 5-O-(1-carboxyvinyl)-3-phosphoshikimate = chorismate + phosphate. The protein operates within metabolic intermediate biosynthesis; chorismate biosynthesis; chorismate from D-erythrose 4-phosphate and phosphoenolpyruvate: step 7/7. Its function is as follows. Catalyzes the anti-1,4-elimination of the C-3 phosphate and the C-6 proR hydrogen from 5-enolpyruvylshikimate-3-phosphate (EPSP) to yield chorismate, which is the branch point compound that serves as the starting substrate for the three terminal pathways of aromatic amino acid biosynthesis. This reaction introduces a second double bond into the aromatic ring system. The sequence is that of Chorismate synthase from Exiguobacterium sp. (strain ATCC BAA-1283 / AT1b).